The following is a 110-amino-acid chain: Large ribosomal subunit protein uL22 (110 aa).

It belongs to the universal ribosomal protein uL22 family. As to quaternary structure, part of the 50S ribosomal subunit.

Its function is as follows. This protein binds specifically to 23S rRNA; its binding is stimulated by other ribosomal proteins, e.g. L4, L17, and L20. It is important during the early stages of 50S assembly. It makes multiple contacts with different domains of the 23S rRNA in the assembled 50S subunit and ribosome. In terms of biological role, the globular domain of the protein is located near the polypeptide exit tunnel on the outside of the subunit, while an extended beta-hairpin is found that lines the wall of the exit tunnel in the center of the 70S ribosome. This chain is Large ribosomal subunit protein uL22, found in Shigella flexneri serotype 5b (strain 8401).